The chain runs to 228 residues: 2,3-bisphosphoglycerate-dependent phosphoglycerate mutase (228 aa).

Residues 8-15 (RHGQSEWN), 21-22 (TG), Arg-60, 87-90 (ERHY), Lys-98, 114-115 (RR), and 183-184 (GN) contribute to the substrate site. Catalysis depends on His-9, which acts as the Tele-phosphohistidine intermediate. Glu-87 (proton donor/acceptor) is an active-site residue.

This sequence belongs to the phosphoglycerate mutase family. BPG-dependent PGAM subfamily.

The enzyme catalyses (2R)-2-phosphoglycerate = (2R)-3-phosphoglycerate. Its pathway is carbohydrate degradation; glycolysis; pyruvate from D-glyceraldehyde 3-phosphate: step 3/5. Catalyzes the interconversion of 2-phosphoglycerate and 3-phosphoglycerate. The polypeptide is 2,3-bisphosphoglycerate-dependent phosphoglycerate mutase (Staphylococcus epidermidis (strain ATCC 35984 / DSM 28319 / BCRC 17069 / CCUG 31568 / BM 3577 / RP62A)).